A 197-amino-acid chain; its full sequence is Cell division protein SepF (197 aa).

The segment at 15-91 (DEEEVESPEE…PPSKSNGKNV (77 aa)) is disordered. Residues 22–31 (PEERQRRVVQ) are compositionally biased toward basic and acidic residues. Residues 37–47 (TNNVQQNQPQQ) are compositionally biased toward low complexity. Composition is skewed to polar residues over residues 48 to 58 (SERSYSNQSKL) and 78 to 91 (RMNQPPSKSNGKNV).

It belongs to the SepF family. In terms of assembly, homodimer. Interacts with FtsZ.

The protein resides in the cytoplasm. Functionally, cell division protein that is part of the divisome complex and is recruited early to the Z-ring. Probably stimulates Z-ring formation, perhaps through the cross-linking of FtsZ protofilaments. Its function overlaps with FtsA. This chain is Cell division protein SepF, found in Staphylococcus haemolyticus (strain JCSC1435).